Reading from the N-terminus, the 88-residue chain is Large ribosomal subunit protein bL27 (88 aa).

Residues 1 to 21 are disordered; it reads MAHKKAGGSSRNGRDSDGRRL.

This sequence belongs to the bacterial ribosomal protein bL27 family.

The sequence is that of Large ribosomal subunit protein bL27 from Methylobacterium nodulans (strain LMG 21967 / CNCM I-2342 / ORS 2060).